The sequence spans 206 residues: Small ribosomal subunit protein eS1 (206 aa).

The protein belongs to the eukaryotic ribosomal protein eS1 family.

The sequence is that of Small ribosomal subunit protein eS1 from Methanocorpusculum labreanum (strain ATCC 43576 / DSM 4855 / Z).